Consider the following 322-residue polypeptide: Probable cell division protein WhiA (322 aa).

The segment at residues 279–312 is a DNA-binding region (H-T-H motif); sequence SLKELGELWTPPVGKSGVNHRIRKIERLAEKLRS.

It belongs to the WhiA family.

Functionally, involved in cell division and chromosome segregation. The protein is Probable cell division protein WhiA of Desulforamulus reducens (strain ATCC BAA-1160 / DSM 100696 / MI-1) (Desulfotomaculum reducens).